Here is a 166-residue protein sequence, read N- to C-terminus: Crossover junction endodeoxyribonuclease RuvC (166 aa).

Active-site residues include Asp7, Glu67, and Asp140. Residues Asp7, Glu67, and Asp140 each coordinate Mg(2+).

The protein belongs to the RuvC family. Homodimer which binds Holliday junction (HJ) DNA. The HJ becomes 2-fold symmetrical on binding to RuvC with unstacked arms; it has a different conformation from HJ DNA in complex with RuvA. In the full resolvosome a probable DNA-RuvA(4)-RuvB(12)-RuvC(2) complex forms which resolves the HJ. Mg(2+) serves as cofactor.

Its subcellular location is the cytoplasm. It catalyses the reaction Endonucleolytic cleavage at a junction such as a reciprocal single-stranded crossover between two homologous DNA duplexes (Holliday junction).. In terms of biological role, the RuvA-RuvB-RuvC complex processes Holliday junction (HJ) DNA during genetic recombination and DNA repair. Endonuclease that resolves HJ intermediates. Cleaves cruciform DNA by making single-stranded nicks across the HJ at symmetrical positions within the homologous arms, yielding a 5'-phosphate and a 3'-hydroxyl group; requires a central core of homology in the junction. The consensus cleavage sequence is 5'-(A/T)TT(C/G)-3'. Cleavage occurs on the 3'-side of the TT dinucleotide at the point of strand exchange. HJ branch migration catalyzed by RuvA-RuvB allows RuvC to scan DNA until it finds its consensus sequence, where it cleaves and resolves the cruciform DNA. The chain is Crossover junction endodeoxyribonuclease RuvC from Brevibacillus brevis (strain 47 / JCM 6285 / NBRC 100599).